The sequence spans 434 residues: Ribosomal RNA-processing protein 14 (434 aa).

N-acetylserine is present on Ser-2. Composition is skewed to basic and acidic residues over residues 32-58 (KSQE…LDPE), 70-79 (VMKKKEKDAK), and 95-105 (KQKEATSKVEG). Residues 32–257 (KSQEQWKAKK…RFKKGKKDSE (226 aa)) form a disordered region. Residues 121–140 (PDEDEEEEEDIKVIFDDEGN) show a composition bias toward acidic residues. The span at 144–178 (LESKKDTTEPDRSVEKKSITEEEKLQRKKNLEALR) shows a compositional bias: basic and acidic residues. Coiled coils occupy residues 162-230 (ITEE…EIAS) and 293-360 (AKND…QKRK). Over residues 220 to 241 (EQEQDQDEIASDSDMEDIDSDL) the composition is skewed to acidic residues. The segment covering 375-392 (TISERQKRREENLRIRKD) has biased composition (basic and acidic residues). The segment at 375 to 434 (TISERQKRREENLRIRKDNKGKKRNKQEKMKRKYVGSAVPKKRAGFEGRLKTGKKKGGPK) is disordered. Basic residues-rich tracts occupy residues 393 to 408 (NKGK…KRKY) and 425 to 434 (KTGKKKGGPK).

The protein belongs to the SURF6 family. In terms of assembly, component of the 90S and 60S pre-ribosomal particles.

The protein localises to the nucleus. The protein resides in the nucleolus. Involved in ribosome biogenesis and cell polarity. Required for the synthesis of both 40S and 60S ribosomal subunits and may also play some direct role in correct positioning of the mitotic spindle during mitosis. The protein is Ribosomal RNA-processing protein 14 (RRP14) of Saccharomyces cerevisiae (strain ATCC 204508 / S288c) (Baker's yeast).